A 230-amino-acid polypeptide reads, in one-letter code: MAKKRGKKYQDALKKVDSKKEYAVDDAVDLVKEIDFANFDATVEVAFNLNVDTKQADQQLRGAIVLPNGTGKDQTVIVFAKGENAKAAQEAGADFVGDQDLVEKIQDGWLDFDVAIATPDMMPQVGRLGRVLGPKGLMPNPKTGTVTMDVAKAVSDAKAGQVTYRTDRDGNVAVPFGKVSFDTAKLVENLKTIEDVVVKARPAAVRGTYIKHASIASTFGPSVTLDLTTF.

Belongs to the universal ribosomal protein uL1 family. Part of the 50S ribosomal subunit.

In terms of biological role, binds directly to 23S rRNA. The L1 stalk is quite mobile in the ribosome, and is involved in E site tRNA release. Protein L1 is also a translational repressor protein, it controls the translation of the L11 operon by binding to its mRNA. In Limosilactobacillus fermentum (strain NBRC 3956 / LMG 18251) (Lactobacillus fermentum), this protein is Large ribosomal subunit protein uL1.